We begin with the raw amino-acid sequence, 356 residues long: Carbohydrate sulfotransferase 10 (356 aa).

The Cytoplasmic portion of the chain corresponds to 1–6 (MHHQWL). Residues 7 to 27 (LLAACFWVIFMFMVASKFITL) traverse the membrane as a helical; Signal-anchor for type II membrane protein segment. At 28–356 (TFKDPDGYSA…GYQKPDFLLN (329 aa)) the chain is on the lumenal side. A glycan (N-linked (GlcNAc...) asparagine) is linked at Asn-99. Residues 127 to 133 (PKVGNTQ) and 189 to 197 (RDPFERLIS) contribute to the 3'-phosphoadenylyl sulfate site. N-linked (GlcNAc...) asparagine glycosylation is found at Asn-228 and Asn-316.

Belongs to the sulfotransferase 2 family.

The protein localises to the golgi apparatus membrane. It catalyses the reaction 3-O-{beta-D-GlcA-(1-&gt;[3)-alpha-D-Xyl-(1-&gt;3)-beta-D-GlcA-(1-&gt;](n)-4)-beta-D-Xyl-(1-&gt;4)-Rib-ol-P-Rib-ol-P-3-beta-D-GalNAc-(1-&gt;3)-beta-D-GlcNAc-(1-&gt;4)-O-6-P-alpha-D-Man}-L-Thr-[protein] + 3'-phosphoadenylyl sulfate = 3-O-{O-3-S-beta-D-GlcA-(1-&gt;[3)-alpha-D-Xyl-(1-&gt;3)-beta-D-GlcA-(1-&gt;](n)-4)-beta-D-Xyl-(1-&gt;4)-Rib-ol-P-Rib-ol-P-3-beta-D-GalNAc-(1-&gt;3)-beta-D-GlcNAc-(1-&gt;4)-O-6-P-alpha-D-Man}-L-Thr-[protein] + adenosine 3',5'-bisphosphate + H(+). It carries out the reaction 17beta-estradiol 3-O-(beta-D-glucuronate) + 3'-phosphoadenylyl sulfate = 17beta-estradiol 3-O-(3-sulfo-beta-D-glucuronate) + adenosine 3',5'-bisphosphate + H(+). The catalysed reaction is 17beta-estradiol 3-O-(beta-D-glucuronate) 17-sulfate + 3'-phosphoadenylyl sulfate = 17beta-estradiol 3-O-(3-sulfo-beta-D-glucuronate) 17-sulfate + adenosine 3',5'-bisphosphate + H(+). The enzyme catalyses 17beta-estradiol 17-O-(beta-D-glucuronate) + 3'-phosphoadenylyl sulfate = 17beta-estradiol 17-O-(3-sulfo-beta-D-glucuronate) + adenosine 3',5'-bisphosphate + H(+). It catalyses the reaction 16alpha,17beta-estriol 3-O-(beta-D-glucuronate) + 3'-phosphoadenylyl sulfate = 16alpha,17beta-estriol 3-O-(3-sulfo-beta-D-glucuronate) + adenosine 3',5'-bisphosphate + H(+). It carries out the reaction 16alpha,17beta-estriol 16-O-(beta-D-glucuronate) + 3'-phosphoadenylyl sulfate = 16alpha,17beta-estriol 16-O-(3-sulfo-beta-D-glucuronate) + adenosine 3',5'-bisphosphate + H(+). The catalysed reaction is 16alpha,17beta-estriol 17-O-(beta-D-glucuronate) + 3'-phosphoadenylyl sulfate = 16alpha,17beta-estriol 17-O-(3-sulfo-beta-D-glucuronate) + adenosine 3',5'-bisphosphate + H(+). The enzyme catalyses estrone 3-O-(beta-D-glucuronate) + 3'-phosphoadenylyl sulfate = estrone 3-O-(3-sulfo-beta-D-glucuronate) + adenosine 3',5'-bisphosphate + H(+). It catalyses the reaction 3alpha,20alpha-dihydroxy-5beta-pregnane 3-O-(beta-D-glucuronate) + 3'-phosphoadenylyl sulfate = 3alpha,20alpha-dihydroxy-5beta-pregnane 3-O-(3-sulfo-beta-D-glucuronate) + adenosine 3',5'-bisphosphate + H(+). It carries out the reaction testosterone 17-O-(beta-D-glucuronate) + 3'-phosphoadenylyl sulfate = testosterone 17-O-(3-sulfo-beta-D-glucuronate) + adenosine 3',5'-bisphosphate + H(+). The catalysed reaction is 3beta-androst-5-en-17-one 3-O-(beta-D-glucuronate) + 3'-phosphoadenylyl sulfate = 3beta-androst-5-en-17-one 3-O-(3-sulfo-beta-D-glucuronate) + adenosine 3',5'-bisphosphate + H(+). The enzyme catalyses 3alpha,17alpha-dihydroxy-5beta-androstane-11-one-17beta-carboxylate 3-O-(beta-D-glucuronate) + 3'-phosphoadenylyl sulfate = 3alpha,17alpha-dihydroxy-5beta-androstane-11-one-17beta-carboxylate 3-O-(3-sulfo-beta-D-glucuronate) + adenosine 3',5'-bisphosphate + H(+). It catalyses the reaction 3alpha-hydroxyetiocholan-17-one 3-O-(beta-D-glucuronate) + 3'-phosphoadenylyl sulfate = 3alpha-hydroxyetiocholan-17-one 3-O-(3-sulfo-beta-D-glucuronate) + adenosine 3',5'-bisphosphate + H(+). It functions in the pathway steroid metabolism. The protein operates within protein modification; carbohydrate sulfation. Catalyzes the transfer of sulfate from 3'-phosphoadenylyl sulfate (PAPS) to position 3 of terminal glucuronic acid of both protein- and lipid-linked oligosaccharides. Participates in biosynthesis of HNK-1 carbohydrate structure 3-O-sulfo-beta-D-GlcA-(1-&gt;3)-beta-D-Gal-(1-&gt;4)-D-GlcNAc-R, a sulfated glucuronyl-lactosaminyl residue carried by many neural recognition molecules, which is involved in cell interactions during ontogenetic development and in synaptic plasticity in the adult. May be indirectly involved in synapse plasticity of the hippocampus, via its role in HNK-1 biosynthesis. Sulfates terminal glucuronyl residue of the laminin globular (LG)-domain binding epitope on DAG1/alpha-dystroglycan and prevents further polymerization by LARGE1 glycosyltransferase. Likely defines the chain length of LG epitope, conferring binding specificity to extracellular matrix components. Plays a role in down-regulating the steroid hormones. Sulfates glucuronidated estrogens and androgens with an impact in hormone cycle and fertility. Has a preference for glucuronyl moiety at the 3-hydroxyl group of a sterol ring rather than the 17-hydroxyl group, showing high catalytic efficiency for 17beta-estradiol 3-O-(beta-D-glucuronate) and dehydroepiandrosterone 3-O-(beta-D-glucuronate) hormones. This Mus musculus (Mouse) protein is Carbohydrate sulfotransferase 10.